Consider the following 159-residue polypeptide: Glucosamine 6-phosphate N-acetyltransferase (159 aa).

N-acetylserine is present on serine 2. D-glucosamine 6-phosphate contacts are provided by residues threonine 28, 86–89 (KIIH), and 98–100 (EDI). Positions 28–159 (TTVGTITPES…NAGVEMQIRK (132 aa)) constitute an N-acetyltransferase domain. Acetyl-CoA-binding positions include 100–102 (IAV) and 108–113 (GQGLGK). D-glucosamine 6-phosphate-binding positions include 129–130 (YK) and aspartate 134. 143-145 (YEK) contributes to the acetyl-CoA binding site. Position 158 (arginine 158) interacts with D-glucosamine 6-phosphate.

It belongs to the acetyltransferase family. GNA1 subfamily. As to quaternary structure, homodimer.

It catalyses the reaction D-glucosamine 6-phosphate + acetyl-CoA = N-acetyl-D-glucosamine 6-phosphate + CoA + H(+). Its pathway is nucleotide-sugar biosynthesis; UDP-N-acetyl-alpha-D-glucosamine biosynthesis; N-acetyl-alpha-D-glucosamine 1-phosphate from alpha-D-glucosamine 6-phosphate (route I): step 1/2. This is Glucosamine 6-phosphate N-acetyltransferase (GNA1) from Saccharomyces cerevisiae (strain ATCC 204508 / S288c) (Baker's yeast).